A 382-amino-acid chain; its full sequence is Homeobox protein bagpipe (382 aa).

3 disordered regions span residues 27 to 66 (NDIL…SKSP), 144 to 178 (TSND…KKRS), and 314 to 382 (QPIP…VEID). A compositionally biased stretch (basic and acidic residues) spans 48-62 (EPEKLKPSSDRERSI). Residues 158–170 (SSPSESPLSHDGS) are compositionally biased toward low complexity. Residues 175–234 (KKRSRAAFSHAQVFELERRFAQQRYLSGPERSEMAKSLRLTETQVKIWFQNRRYKTKRKQ) constitute a DNA-binding region (homeobox). Residues 321–335 (QSSSFVTASSASSSP) are compositionally biased toward low complexity. Acidic residues predominate over residues 373 to 382 (EDVDENVEID).

Belongs to the NK-3 homeobox family. Is expressed in a segmented pattern in visceral muscle and in a subset of cardiac muscles. Loss of activity results in segmental gaps in midgut visceral muscle.

It localises to the nucleus. In terms of biological role, involved in the determination of cell fates in the dorsal mesoderm. This is Homeobox protein bagpipe (bap) from Drosophila melanogaster (Fruit fly).